A 149-amino-acid chain; its full sequence is Hydrogenase expression/formation protein HupT (149 aa).

This sequence belongs to the HupJ family.

The chain is Hydrogenase expression/formation protein HupT (hupT) from Azotobacter chroococcum mcd 1.